The sequence spans 522 residues: Poly(A) polymerase (522 aa).

ATP contacts are provided by residues 63–65, 76–78, Asp-130, Lys-193, Tyr-202, and 211–212; these read YGS, DID, and GI. Positions 76, 78, and 130 each coordinate Mg(2+). Residues 475-522 form a disordered region; that stretch reads QLKAKEENSIPNEEKKEQLKKEMKQEANTIVKNSSTDDDFMKRFTRKN. Positions 476-499 are enriched in basic and acidic residues; that stretch reads LKAKEENSIPNEEKKEQLKKEMKQ.

Belongs to the poly(A) polymerase family. Requires Mg(2+) as cofactor. The cofactor is Mn(2+).

Its subcellular location is the cytoplasm. It localises to the nucleus. The catalysed reaction is RNA(n) + ATP = RNA(n)-3'-adenine ribonucleotide + diphosphate. In terms of biological role, polymerase that creates the 3'-poly(A) tail of mRNA's. May acquire specificity through interaction with a cleavage and polyadenylation factor. This chain is Poly(A) polymerase, found in Entamoeba histolytica (strain ATCC 30459 / HM-1:IMSS / ABRM).